A 258-amino-acid chain; its full sequence is MIRFTLALAVIGVTFAASTPQIETNPNLEIIGGHDANIIDYPWQISFQHRLHHFCGGFLISDTWVVTAAHCIYEGYSDTENLNIRVGSSEWSAKGKLHDVKRYITHPQYNITTMDNDIALLELALPVDLNQSVRPAKLPVAGQEIPDNAQLTITGWGATYVGGYNEYTLQVVTIPTVNINVCQSAITNDTITNNMFCAGLIGVGGKDSCSGDSGGPAVIDGQVVGIVSWGYSCADPKYPGIYTKVSAFRDWINEETEI.

Residues methionine 1–alanine 16 form the signal peptide. The propeptide at alanine 17 to glutamate 29 is activation peptide. The region spanning isoleucine 30–glutamate 257 is the Peptidase S1 domain. Cysteine 55 and cysteine 71 are disulfide-bonded. Residue histidine 70 is the Charge relay system of the active site. The N-linked (GlcNAc...) asparagine glycan is linked to asparagine 110. The Charge relay system role is filled by aspartate 117. Asparagine 130 and asparagine 188 each carry an N-linked (GlcNAc...) asparagine glycan. 2 cysteine pairs are disulfide-bonded: cysteine 182-cysteine 197 and cysteine 209-cysteine 233. Serine 213 serves as the catalytic Charge relay system.

The protein belongs to the peptidase S1 family. As to expression, expressed in larval carcasses and gut, and adult gut.

The protein localises to the secreted. It catalyses the reaction Preferential cleavage: Arg-|-Xaa, Lys-|-Xaa.. The sequence is that of Trypsin from Phaedon cochleariae (Mustard beetle).